Here is a 334-residue protein sequence, read N- to C-terminus: Ferredoxin--NADP reductase (334 aa).

7 residues coordinate FAD: Asp33, Gln41, Tyr46, Ala86, Phe120, Asp286, and Thr327.

Belongs to the ferredoxin--NADP reductase type 2 family. As to quaternary structure, homodimer. FAD serves as cofactor.

It catalyses the reaction 2 reduced [2Fe-2S]-[ferredoxin] + NADP(+) + H(+) = 2 oxidized [2Fe-2S]-[ferredoxin] + NADPH. In Rickettsia akari (strain Hartford), this protein is Ferredoxin--NADP reductase.